Here is a 716-residue protein sequence, read N- to C-terminus: Exocyst complex component 8 (716 aa).

The residue at position 15 (S15) is a Phosphoserine. The segment covering 110 to 119 has biased composition (low complexity); it reads STGEDTAGAG. The disordered stretch occupies residues 110 to 149; sequence STGEDTAGAGPRERGAAQAGFLPGPAGVPREGPGTGEEGK. The region spanning 173–273 is the PH domain; that stretch reads YLVYNGDLVE…WLEVLEETKR (101 aa). A compositionally biased stretch (basic and acidic residues) spans 275–284; the sequence is LSDKRRREQE. The segment at 275 to 319 is disordered; sequence LSDKRRREQEEAAALRAPPPVTSKGSNPFEDEAEEELATPEAEEE. Residues 303-319 show a composition bias toward acidic residues; it reads FEDEAEEELATPEAEEE. T313 carries the phosphothreonine modification.

It belongs to the EXO84 family. As to quaternary structure, the exocyst complex is composed of EXOC1, EXOC2, EXOC3, EXOC4, EXOC5, EXOC6, EXOC7 and EXOC8. Interacts (via PH domain) with GTP-bound RALA and RALB. Interacts with SH3BP1; required for the localization of both SH3BP1 and the exocyst to the leading edge of migrating cells.

It is found in the cytoplasm. The protein resides in the perinuclear region. It localises to the cell projection. Its subcellular location is the growth cone. Functionally, component of the exocyst complex involved in the docking of exocytic vesicles with fusion sites on the plasma membrane. The protein is Exocyst complex component 8 (Exoc8) of Rattus norvegicus (Rat).